The primary structure comprises 293 residues: tRNA-cytidine(32) 2-sulfurtransferase (293 aa).

The PP-loop motif motif lies at 71–76 (SGGKDS). [4Fe-4S] cluster is bound by residues cysteine 146, cysteine 149, and cysteine 237.

Belongs to the TtcA family. As to quaternary structure, homodimer. Mg(2+) serves as cofactor. The cofactor is [4Fe-4S] cluster.

It is found in the cytoplasm. The enzyme catalyses cytidine(32) in tRNA + S-sulfanyl-L-cysteinyl-[cysteine desulfurase] + AH2 + ATP = 2-thiocytidine(32) in tRNA + L-cysteinyl-[cysteine desulfurase] + A + AMP + diphosphate + H(+). It participates in tRNA modification. Catalyzes the ATP-dependent 2-thiolation of cytidine in position 32 of tRNA, to form 2-thiocytidine (s(2)C32). The sulfur atoms are provided by the cysteine/cysteine desulfurase (IscS) system. This chain is tRNA-cytidine(32) 2-sulfurtransferase, found in Sinorhizobium medicae (strain WSM419) (Ensifer medicae).